A 237-amino-acid chain; its full sequence is rRNA-processing protein EFG1 (237 aa).

Residues 1 to 24 form a disordered region; that stretch reads MPKTVKNPKNNKSRSRGAPIQVAE. Coiled-coil stretches lie at residues 53 to 113 and 166 to 186; these read DKKI…ISQT and LKITEERRREFRKYIEKLMEE. The interval 206 to 237 is disordered; it reads NDKTQKAVLTEEIDAPEQKQDEQQEEQDDFFE. Positions 228–237 are enriched in acidic residues; the sequence is QQEEQDDFFE.

Belongs to the EFG1 family.

It is found in the nucleus. The protein localises to the nucleolus. In terms of biological role, involved in rRNA processing. This Candida albicans (strain SC5314 / ATCC MYA-2876) (Yeast) protein is rRNA-processing protein EFG1.